A 399-amino-acid chain; its full sequence is uncharacterized protein (399 aa).

The next 10 helical transmembrane spans lie at 7–27 (FSAL…LYLI), 33–53 (FLQI…FEVP), 79–99 (AFFP…IWAL), 131–151 (LLIT…SLNI), 153–173 (FPFL…SVFI), 208–228 (VLLI…ISRY), 242–262 (SLGY…TLTI), 296–316 (PLGI…HPIV), 335–355 (LNSG…GIIS), and 357–377 (AFGL…PIIL).

This sequence belongs to the major facilitator superfamily. Drug:H(+) antiporter-3 (DHA3) (TC 2.A.1.21) family.

It is found in the cell membrane. This is an uncharacterized protein from Bacillus subtilis (strain 168).